A 149-amino-acid polypeptide reads, in one-letter code: Nucleoside diphosphate kinase (149 aa).

ATP is bound by residues Lys-9, Phe-57, Arg-85, Thr-91, Arg-102, and Asn-112. His-115 functions as the Pros-phosphohistidine intermediate in the catalytic mechanism.

The protein belongs to the NDK family. As to quaternary structure, homotetramer. Requires Mg(2+) as cofactor.

Its subcellular location is the cytoplasm. The catalysed reaction is a 2'-deoxyribonucleoside 5'-diphosphate + ATP = a 2'-deoxyribonucleoside 5'-triphosphate + ADP. It catalyses the reaction a ribonucleoside 5'-diphosphate + ATP = a ribonucleoside 5'-triphosphate + ADP. Major role in the synthesis of nucleoside triphosphates other than ATP. The ATP gamma phosphate is transferred to the NDP beta phosphate via a ping-pong mechanism, using a phosphorylated active-site intermediate. This is Nucleoside diphosphate kinase from Staphylococcus aureus (strain MSSA476).